We begin with the raw amino-acid sequence, 473 residues long: Glutamate--tRNA ligase (473 aa).

The 'HIGH' region signature appears at P11 to G21. Residues K240 to R244 carry the 'KMSKS' region motif. K243 is an ATP binding site.

The protein belongs to the class-I aminoacyl-tRNA synthetase family. Glutamate--tRNA ligase type 1 subfamily. In terms of assembly, monomer.

It is found in the cytoplasm. It carries out the reaction tRNA(Glu) + L-glutamate + ATP = L-glutamyl-tRNA(Glu) + AMP + diphosphate. Catalyzes the attachment of glutamate to tRNA(Glu) in a two-step reaction: glutamate is first activated by ATP to form Glu-AMP and then transferred to the acceptor end of tRNA(Glu). The chain is Glutamate--tRNA ligase from Afipia carboxidovorans (strain ATCC 49405 / DSM 1227 / KCTC 32145 / OM5) (Oligotropha carboxidovorans).